The sequence spans 164 residues: Inner membrane assembly complex subunit 17 (164 aa).

The N-terminal 28 residues, 1–28 (MIKTAKISTLRLAITRNARNLSFTTLVR), are a transit peptide targeting the mitochondrion. The Mitochondrial matrix segment spans residues 29 to 97 (SPEVDNSKIK…NEVPLKRFTR (69 aa)). Residues 98–118 (PLWIFILMASTFYLGAHLVWW) traverse the membrane as a helical segment. Over 119–164 (KLAYEKKEVELKHKVDSLETTLKDVMKEKATGPTPCNNKKSWYKFW) the chain is Mitochondrial intermembrane. Positions 121–149 (AYEKKEVELKHKVDSLETTLKDVMKEKAT) form a coiled coil.

It belongs to the INA17 family. In terms of assembly, component of the inner membrane assembly (INA) complex, composed of INA17 and INA22. Interacts with a subset of F(1)F(0)-ATP synthase subunits of the F(1)-domain and the peripheral stalk.

It localises to the mitochondrion inner membrane. Component of the INA complex (INAC) that promotes the biogenesis of mitochondrial F(1)F(0)-ATP synthase. INAC facilitates the assembly of the peripheral stalk and promotes the assembly of the catalytic F(1)-domain with the membrane-embedded F(0)-domain. The polypeptide is Inner membrane assembly complex subunit 17 (Candida glabrata (strain ATCC 2001 / BCRC 20586 / JCM 3761 / NBRC 0622 / NRRL Y-65 / CBS 138) (Yeast)).